Reading from the N-terminus, the 73-residue chain is UPF0435 protein lwe1727 (73 aa).

Belongs to the UPF0435 family.

The protein is UPF0435 protein lwe1727 of Listeria welshimeri serovar 6b (strain ATCC 35897 / DSM 20650 / CCUG 15529 / CIP 8149 / NCTC 11857 / SLCC 5334 / V8).